A 464-amino-acid chain; its full sequence is Anthranilate synthase component 1 (464 aa).

Residues Ser41 and Pro236–Met238 each bind L-tryptophan. Gly271–Thr272 provides a ligand contact to chorismate. A Mg(2+)-binding site is contributed by Glu298. Residues Tyr386, Arg406, Gly420–Gly422, and Gly422 contribute to the chorismate site. A Mg(2+)-binding site is contributed by Glu435.

The protein belongs to the anthranilate synthase component I family. In terms of assembly, heterotetramer consisting of two non-identical subunits: a beta subunit (TrpG) and a large alpha subunit (TrpE). Mg(2+) serves as cofactor.

It catalyses the reaction chorismate + L-glutamine = anthranilate + pyruvate + L-glutamate + H(+). Its pathway is amino-acid biosynthesis; L-tryptophan biosynthesis; L-tryptophan from chorismate: step 1/5. With respect to regulation, feedback inhibited by tryptophan. Part of a heterotetrameric complex that catalyzes the two-step biosynthesis of anthranilate, an intermediate in the biosynthesis of L-tryptophan. In the first step, the glutamine-binding beta subunit (TrpG) of anthranilate synthase (AS) provides the glutamine amidotransferase activity which generates ammonia as a substrate that, along with chorismate, is used in the second step, catalyzed by the large alpha subunit of AS (TrpE) to produce anthranilate. In the absence of TrpG, TrpE can synthesize anthranilate directly from chorismate and high concentrations of ammonia. The sequence is that of Anthranilate synthase component 1 (trpE) from Methanothermobacter thermautotrophicus (strain ATCC 29096 / DSM 1053 / JCM 10044 / NBRC 100330 / Delta H) (Methanobacterium thermoautotrophicum).